Consider the following 139-residue polypeptide: Histone H2B.11 (139 aa).

The span at 1 to 39 shows a compositional bias: basic and acidic residues; that stretch reads MAPKAEKKPAEKKPVEEKAEKKPKAEKRVPGAKEGGGEK. The tract at residues 1–47 is disordered; sequence MAPKAEKKPAEKKPVEEKAEKKPKAEKRVPGAKEGGGEKKGKKKAKK. N6-acetyllysine is present on residues Lys-7 and Lys-27. Lys-135 is covalently cross-linked (Glycyl lysine isopeptide (Lys-Gly) (interchain with G-Cter in ubiquitin)).

The protein belongs to the histone H2B family. The nucleosome is a histone octamer containing two molecules each of H2A, H2B, H3 and H4 assembled in one H3-H4 heterotetramer and two H2A-H2B heterodimers. The octamer wraps approximately 147 bp of DNA. In terms of processing, can be acetylated to form H2BK6ac and H2BK33ac. Post-translationally, monoubiquitinated by BRE1 to form H2BK143ub1 and deubiquitinated by UBP26. Required for heterochromatic histone H3 di- and trimethylation at H3K4me. May give a specific tag for epigenetic transcriptional activation.

The protein resides in the nucleus. It is found in the chromosome. In terms of biological role, core component of nucleosome. Nucleosomes wrap and compact DNA into chromatin, limiting DNA accessibility to the cellular machineries which require DNA as a template. Histones thereby play a central role in transcription regulation, DNA repair, DNA replication and chromosomal stability. DNA accessibility is regulated via a complex set of post-translational modifications of histones, also called histone code, and nucleosome remodeling. This Oryza sativa subsp. indica (Rice) protein is Histone H2B.11 (H2B.11).